Reading from the N-terminus, the 524-residue chain is Cytokinin dehydrogenase 7 (524 aa).

The signal sequence occupies residues 1–22; that stretch reads MAARCSIAFMIMASCLSVVVSG. N-linked (GlcNAc...) asparagine glycosylation is present at N42. An FAD-binding PCMH-type domain is found at 55-233; sequence VAAAPEAVLH…TRARIGLMPA (179 aa). Positions 91 and 93 each coordinate FAD. H94 carries the post-translational modification Pros-8alpha-FAD histidine. Positions 95 and 99 each coordinate FAD. A glycan (N-linked (GlcNAc...) asparagine) is linked at N121. Residues D157, T162, S168, I172, and I223 each coordinate FAD. N277 and N320 each carry an N-linked (GlcNAc...) asparagine glycan. The FAD site is built by Y472, S507, and Q510.

It belongs to the oxygen-dependent FAD-linked oxidoreductase family. In terms of assembly, monomer. The cofactor is FAD.

It is found in the secreted. The protein localises to the extracellular space. It carries out the reaction N(6)-dimethylallyladenine + A + H2O = 3-methyl-2-butenal + adenine + AH2. Its function is as follows. Catalyzes the oxidation of cytokinins, a family of N(6)-substituted adenine derivatives that are plant hormones, where the substituent is an isopentenyl group. In Oryza sativa subsp. japonica (Rice), this protein is Cytokinin dehydrogenase 7 (CKX7).